The following is a 436-amino-acid chain: Trigger factor (436 aa).

The PPIase FKBP-type domain maps to 161–246; that stretch reads GDQVIVDFDG…VREVKEPTLP (86 aa).

It belongs to the FKBP-type PPIase family. Tig subfamily.

The protein localises to the cytoplasm. The enzyme catalyses [protein]-peptidylproline (omega=180) = [protein]-peptidylproline (omega=0). In terms of biological role, involved in protein export. Acts as a chaperone by maintaining the newly synthesized protein in an open conformation. Functions as a peptidyl-prolyl cis-trans isomerase. The sequence is that of Trigger factor from Thioalkalivibrio sulfidiphilus (strain HL-EbGR7).